A 248-amino-acid polypeptide reads, in one-letter code: MSIQSLLDYISVTPDIRQQGKVKHKLSAILFLTVCAVIAGADEWQEIEDFGHERLEWLKKYGDFDNGIPVDDTIARVVSNIDSLAFEKMFIEWMQECHEITDGEIIAIDGKTIRGSFDKGKRKGAIHMVSAFSNENGVVLGQVKTEAKSNEITAIPELLNLLYLKKNLITIDAMGCQKDIASKIKDKKADYLLAVKGNQGKLHHAFEEKFPVNVFSNYKGDSFSTQEISHGRKETRLHIVSNVTPELL.

This sequence belongs to the transposase 11 family.

This is Putative transposase YncI (yncI) from Escherichia coli (strain K12).